The sequence spans 362 residues: Ciliary neurotrophic factor receptor subunit alpha (362 aa).

A signal peptide spans 1 to 19; that stretch reads MANPVPSACCVVLAAVVVV. The Ig-like C2-type domain maps to 23–103; the sequence is RHSQQDSHIQ…HLKYQTYLRV (81 aa). A disulfide bridge links C44 with C87. Residues N58, N68, N140, and N188 are each glycosylated (N-linked (GlcNAc...) asparagine). 2 Fibronectin type-III domains span residues 106–203 and 204–304; these read PPKE…VKPD and PPES…TEEP. The WSXWS motif signature appears at 288-292; sequence WSDWS. D334 carries the GPI-anchor amidated aspartate lipid modification. A propeptide spans 335-362 (removed in mature form); it reads KGAGVGSGAVAVCWTAGLVLAAYGVLFI.

Belongs to the type I cytokine receptor family. Type 3 subfamily. Heterotrimer of the alpha subunit, LIFR and IL6ST. In terms of tissue distribution, highly expressed in nervous system. Also found in skeletal muscle.

The protein resides in the cell membrane. In terms of biological role, binds to CNTF (GPA). The alpha subunit provides the receptor specificity. The protein is Ciliary neurotrophic factor receptor subunit alpha (CNTFR) of Gallus gallus (Chicken).